The chain runs to 234 residues: Large ribosomal subunit protein uL1 (234 aa).

This sequence belongs to the universal ribosomal protein uL1 family. In terms of assembly, part of the 50S ribosomal subunit.

Binds directly to 23S rRNA. The L1 stalk is quite mobile in the ribosome, and is involved in E site tRNA release. Functionally, protein L1 is also a translational repressor protein, it controls the translation of the L11 operon by binding to its mRNA. The protein is Large ribosomal subunit protein uL1 of Geobacter metallireducens (strain ATCC 53774 / DSM 7210 / GS-15).